Here is a 335-residue protein sequence, read N- to C-terminus: UPF0353 protein MAP_3435c (335 aa).

2 helical membrane-spanning segments follow: residues 18 to 38 (WFFLALLAVLLVIGLYVVQQF) and 67 to 87 (VPTILLATSLVLLTTAMAGPT). Positions 98-294 (VVMLVIDVSE…DSLKNVYSTL (197 aa)) constitute a VWFA domain. A helical transmembrane segment spans residues 309-329 (MAWMLLGAVVLAGAVLAGLLL).

Belongs to the UPF0353 family.

The protein localises to the cell membrane. The sequence is that of UPF0353 protein MAP_3435c from Mycolicibacterium paratuberculosis (strain ATCC BAA-968 / K-10) (Mycobacterium paratuberculosis).